The primary structure comprises 201 residues: MAIILPELPYAYDALEPQFDAETMTLHHDKHHATYVANTNAALEKHPEIGENLEELLADVTKIPEDIRQALINNGGGHLNHALFWELLSPEKQDVTSDVAQAIDDAFGSFDAFKEQFTAAATGRFGSGWAWLVVNKEGQLEITSTANQDTPISEGKKPILALDVWEHAYYLNYRNVRPNYIKAFFEIINWKKVSELYQAAK.

The Mn(2+) site is built by His-27, His-81, Asp-163, and His-167.

It belongs to the iron/manganese superoxide dismutase family. In terms of assembly, homodimer. Requires Mn(2+) as cofactor.

Its subcellular location is the secreted. The catalysed reaction is 2 superoxide + 2 H(+) = H2O2 + O2. Functionally, destroys superoxide anion radicals which are normally produced within the cells and which are toxic to biological systems. The sequence is that of Superoxide dismutase [Mn] (sodA) from Streptococcus pyogenes serotype M3 (strain ATCC BAA-595 / MGAS315).